Here is a 1775-residue protein sequence, read N- to C-terminus: Stereocilin (1775 aa).

Residues 1–22 form the signal peptide; sequence MALSLWPLLLLLLLLLLLSFAV. Asn-65, Asn-202, Asn-297, Asn-366, Asn-427, Asn-476, Asn-540, Asn-565, Asn-656, Asn-824, Asn-916, Asn-964, Asn-1179, and Asn-1274 each carry an N-linked (GlcNAc...) asparagine glycan.

It belongs to the stereocilin family.

It localises to the cell surface. The protein resides in the cell projection. The protein localises to the kinocilium. Its subcellular location is the stereocilium. Essential to the formation of horizontal top connectors between outer hair cell stereocilia. This Homo sapiens (Human) protein is Stereocilin (STRC).